The chain runs to 187 residues: Shikimate kinase (187 aa).

19-24 (GSGKST) contributes to the ATP binding site. Serine 23 contributes to the Mg(2+) binding site. 3 residues coordinate substrate: aspartate 41, arginine 65, and glycine 87. Residue arginine 124 participates in ATP binding. Arginine 143 is a binding site for substrate. Arginine 160 provides a ligand contact to ATP.

The protein belongs to the shikimate kinase family. Monomer. Mg(2+) serves as cofactor.

Its subcellular location is the cytoplasm. The catalysed reaction is shikimate + ATP = 3-phosphoshikimate + ADP + H(+). The protein operates within metabolic intermediate biosynthesis; chorismate biosynthesis; chorismate from D-erythrose 4-phosphate and phosphoenolpyruvate: step 5/7. Its function is as follows. Catalyzes the specific phosphorylation of the 3-hydroxyl group of shikimic acid using ATP as a cosubstrate. This Rippkaea orientalis (strain PCC 8801 / RF-1) (Cyanothece sp. (strain PCC 8801)) protein is Shikimate kinase.